A 173-amino-acid chain; its full sequence is Translationally-controlled tumor protein homolog (173 aa).

Residues 1–173 (MIIFKDMITG…FKHGLEEEKV (173 aa)) form the TCTP domain.

The protein belongs to the TCTP family. As to expression, expressed by the venom gland.

It localises to the secreted. Its function is as follows. Venom protein that causes edema, enhances vascular permeability and is likely related to the inflammatory activity of the venom. The sequence is that of Translationally-controlled tumor protein homolog from Grammostola rosea (Chilean rose tarantula).